Consider the following 198-residue polypeptide: Suppressor of cytokine signaling 2 (198 aa).

Positions 1–31 (MTLRCLEPSGNGAEGTQSQWGTSGSAEEPSP) are disordered. Positions 1 to 75 (MTLRCLEPSG…PEGTFLIRDS (75 aa)) are interaction with AREL1. The segment covering 14 to 25 (EGTQSQWGTSGS) has biased composition (polar residues). Residues Ser-30 and Ser-52 each carry the phosphoserine modification. Residues 48–156 (WYWGSMTVNE…TVHLYLTKPL (109 aa)) form the SH2 domain. An SOCS box domain is found at 151 to 197 (YLTKPLYTSAPPLQHLCRLTINKCTGTIWGLPLPTRLKDYLEEYKFQ). A Glycyl lysine isopeptide (Lys-Gly) (interchain with G-Cter in ubiquitin) cross-link involves residue Lys-173.

Substrate-recognition component of the ECS(SOCS2) complex, composed of SOCS2, CUL5, ELOB, ELOC and RNF7/RBX2. Interacts with IGF1R. Interacts with DCUN1D1. Ubiquitinated; mediated by AREL1 and leading to its subsequent proteasomal degradation. Ubiquitination is dependent on its phosphorylation at Ser-52, by PKC. Ubiquitination is stimulated by LPS. In terms of processing, phosphorylation at Ser-52 by PKC facilitates its ubiquitination and proteasomal degradation.

The protein resides in the cytoplasm. The protein operates within protein modification; protein ubiquitination. Functionally, substrate-recognition component of a cullin-5-RING E3 ubiquitin-protein ligase complex (ECS complex, also named CRL5 complex), which mediates the ubiquitination and subsequent proteasomal degradation of target proteins, such as EPOR and GHR. Specifically recognizes and binds phosphorylated proteins via its SH2 domain, promoting their ubiquitination. The ECS(SOCS2) complex acts as a key regulator of growth hormone receptor (GHR) levels by mediating ubiquitination and degradation of GHR, following GHR phosphorylation by JAK2. The ECS(SOCS2) also catalyzes ubiquitination and degradation of JAK2-phosphorylated EPOR. The polypeptide is Suppressor of cytokine signaling 2 (SOCS2) (Sus scrofa (Pig)).